A 492-amino-acid chain; its full sequence is Glutamyl-tRNA(Gln) amidotransferase subunit A (492 aa).

Catalysis depends on charge relay system residues Lys-79 and Ser-154. Catalysis depends on Ser-178, which acts as the Acyl-ester intermediate.

It belongs to the amidase family. GatA subfamily. In terms of assembly, heterotrimer of A, B and C subunits.

The catalysed reaction is L-glutamyl-tRNA(Gln) + L-glutamine + ATP + H2O = L-glutaminyl-tRNA(Gln) + L-glutamate + ADP + phosphate + H(+). Allows the formation of correctly charged Gln-tRNA(Gln) through the transamidation of misacylated Glu-tRNA(Gln) in organisms which lack glutaminyl-tRNA synthetase. The reaction takes place in the presence of glutamine and ATP through an activated gamma-phospho-Glu-tRNA(Gln). The polypeptide is Glutamyl-tRNA(Gln) amidotransferase subunit A (Acinetobacter baumannii (strain ACICU)).